Here is an 87-residue protein sequence, read N- to C-terminus: Large ribosomal subunit protein bL31B (87 aa).

It belongs to the bacterial ribosomal protein bL31 family. Type B subfamily. Part of the 50S ribosomal subunit.

The protein is Large ribosomal subunit protein bL31B of Burkholderia thailandensis (strain ATCC 700388 / DSM 13276 / CCUG 48851 / CIP 106301 / E264).